The chain runs to 690 residues: Heterogeneous nuclear ribonucleoprotein M (690 aa).

The segment covering 1–13 (MAAGVEAAAEVAA) has biased composition (low complexity). The segment at 1-63 (MAAGVEAAAE…KRGGNRFEPY (63 aa)) is disordered. The residue at position 2 (Ala2) is an N-acetylalanine. Residue Lys17 forms a Glycyl lysine isopeptide (Lys-Gly) (interchain with G-Cter in SUMO2) linkage. Ser29 is subject to Phosphoserine. Glycyl lysine isopeptide (Lys-Gly) (interchain with G-Cter in SUMO2) cross-links involve residues Lys37, Lys68, and Lys82. Positions 37 to 49 (KGEERPTQNEKRK) are enriched in basic and acidic residues. RRM domains are found at residues 70–148 (YRAF…EDPD) and 164–241 (STVF…MDER). Residue Ser85 is modified to Phosphoserine. Glycyl lysine isopeptide (Lys-Gly) (interchain with G-Cter in SUMO2) cross-links involve residues Lys87 and Lys126. Residue Lys133 is modified to N6-acetyllysine; alternate. Lys133 is covalently cross-linked (Glycyl lysine isopeptide (Lys-Gly) (interchain with G-Cter in SUMO2); alternate). Glycyl lysine isopeptide (Lys-Gly) (interchain with G-Cter in SUMO2) cross-links involve residues Lys142 and Lys144. Ser164 is subject to Phosphoserine. Residue Lys181 forms a Glycyl lysine isopeptide (Lys-Gly) (interchain with G-Cter in SUMO2) linkage. At Lys237 the chain carries N6-acetyllysine; alternate. Lys237 participates in a covalent cross-link: Glycyl lysine isopeptide (Lys-Gly) (interchain with G-Cter in SUMO2); alternate. Residues Lys245 and Lys305 each participate in a glycyl lysine isopeptide (Lys-Gly) (interchain with G-Cter in SUMO2) cross-link. Phosphoserine is present on residues Ser325 and Ser337. Residues Lys341 and Lys348 each participate in a glycyl lysine isopeptide (Lys-Gly) (interchain with G-Cter in SUMO2) cross-link. Position 357 is a phosphoserine (Ser357). Repeat copies occupy residues 360–365 (GIERMG), 367–372 (GIDRIS), 375–380 (GMERMG), and 386–391 (GMDRVG). The 27 X 6 AA repeats of [GEVSTPAN]-[ILMV]-[DE]-[RH]-[MLVI]-[GAV] stretch occupies residues 360–568 (GIERMGPGID…ALGAGIERMG (209 aa)). A Phosphoserine modification is found at Ser392. Tandem repeats lie at residues 393–398 (EIERMG), 400–405 (VMDRMG), and 406–411 (SVERMG). Residue Ser412 is modified to Phosphoserine. Repeat copies occupy residues 413-418 (GIERMG), 421-426 (GLDHMA), 428-433 (SIERMG), and 435-440 (TMERIG). Ser428 is modified (phosphoserine). Ser441 carries the phosphoserine modification. 16 tandem repeats follow at residues 442–447 (GVERMG), 453–458 (GLERMA), 460–465 (PIDRVG), 467–472 (TIERMG), 474–479 (GVERMG), 481–486 (AIERMG), 488–493 (SMDRMV), 500–505 (GLERMG), 507–512 (VMDRMA), 514–519 (GLERMG), 522–527 (NLERMG), 528–532 (LERMG), 535–540 (SLERMG), 541–545 (LERMG), 548–553 (SLERMG), and 563–568 (GIERMG). Arg456 carries the post-translational modification Omega-N-methylarginine. Ser488 bears the Phosphoserine mark. At Ser535 the chain carries Phosphoserine. A Phosphoserine modification is found at Ser548. Ser578, Ser593, and Ser597 each carry phosphoserine. A Glycyl lysine isopeptide (Lys-Gly) (interchain with G-Cter in SUMO2) cross-link involves residue Lys611. The region spanning 613-689 (CQIFVRNLPF…REIDVRIDRN (77 aa)) is the RRM 3 domain. Thr625 carries the post-translational modification Phosphothreonine. Residue Lys627 forms a Glycyl lysine isopeptide (Lys-Gly) (interchain with G-Cter in SUMO2) linkage. The residue at position 632 (Lys632) is an N6-acetyllysine. Residues Lys645 and Lys652 each participate in a glycyl lysine isopeptide (Lys-Gly) (interchain with G-Cter in SUMO2) cross-link. N6-acetyllysine; alternate is present on Lys658. Residue Lys658 forms a Glycyl lysine isopeptide (Lys-Gly) (interchain with G-Cter in SUMO2); alternate linkage. Lys658 is covalently cross-linked (Glycyl lysine isopeptide (Lys-Gly) (interchain with G-Cter in SUMO1); alternate). Ser661 bears the Phosphoserine mark. Lys676 is covalently cross-linked (Glycyl lysine isopeptide (Lys-Gly) (interchain with G-Cter in SUMO2)).

In terms of assembly, identified in the spliceosome C complex. Interacts with PPIA/CYPA. In terms of processing, sumoylated. Expressed in all tissues tested, including liver, heart, lung, skeletal muscle, kidney, stomach, large intestine, small intestine, pancreas, spleen, peritoneal macrophage and thyroid.

The protein localises to the nucleus matrix. In terms of biological role, pre-mRNA binding protein, binds avidly to poly(G) and poly(U) RNA homopolymers. Involved in splicing. Acts as a receptor for carcinoembryonic antigen in Kupffer cells, may initiate a series of signaling events leading to tyrosine phosphorylation of proteins and induction of IL-1 alpha, IL-6, IL-10 and tumor necrosis factor alpha cytokines. This Rattus norvegicus (Rat) protein is Heterogeneous nuclear ribonucleoprotein M (Hnrnpm).